We begin with the raw amino-acid sequence, 439 residues long: MAEDVSSAAPSPRGCADGRDADPTEEQMAETERNDEEQFECQELLECQVQVGAPEEEEEEEEDAGLVAEAEAVAAGWMLDFLCLSLCRAFRDGRSEDFRRTRNSAEAIIHGLSSLTACQLRTIYICQFLTRIAAGKTLDAQFENDERITPLESALMIWGSIEKEHDKLHEEIQNLIKIQAIAVCMENGNFKEAEEVFERIFGDPNSHMPFKSKLLMIISQKDTFHSFFQHFSYNHMMEKIKSYVNYVLSEKSSTFLMKAAAKVVESKRTRTITSQDKPSGNDVEMETEANLDTRKSVSDKQSAVTESSEGTVSLLRSHKNLFLSKLQHGTQQQDLNKKERRVGTPQSTKKKKESRRATESRIPVSKSQPVTPEKHRARKRQAWLWEEDKNLRSGVRKYGEGNWSKILLHYKFNNRTSVMLKDRWRTMKKLKLISSDSED.

Residues 1-36 (MAEDVSSAAPSPRGCADGRDADPTEEQMAETERNDE) form a disordered region. At Ala-2 the chain carries N-acetylalanine. At Ser-11 the chain carries Phosphoserine. Residues 23–36 (PTEEQMAETERNDE) show a composition bias toward acidic residues. Residues 58–268 (EEEEEDAGLV…AAAKVVESKR (211 aa)) form a TRFH mediates dimerization region. A Glycyl lysine isopeptide (Lys-Gly) (interchain with G-Cter in SUMO2) cross-link involves residue Lys-213. The residue at position 219 (Ser-219) is a Phosphoserine; by ATM. Residues 265 to 378 (ESKRTRTITS…PVTPEKHRAR (114 aa)) are interaction with RLIM. Positions 266-311 (SKRTRTITSQDKPSGNDVEMETEANLDTRKSVSDKQSAVTESSEGT) are disordered. A compositionally biased stretch (polar residues) spans 299-311 (DKQSAVTESSEGT). Residue Lys-325 forms a Glycyl lysine isopeptide (Lys-Gly) (interchain with G-Cter in SUMO2) linkage. Residues 326–375 (LQHGTQQQDLNKKERRVGTPQSTKKKKESRRATESRIPVSKSQPVTPEKH) are disordered. The Nuclear localization signal motif lies at 337 to 356 (KKERRVGTPQSTKKKKESRR). Lys-366 is covalently cross-linked (Glycyl lysine isopeptide (Lys-Gly) (interchain with G-Cter in SUMO2)). The 58-residue stretch at 375–432 (HRARKRQAWLWEEDKNLRSGVRKYGEGNWSKILLHYKFNNRTSVMLKDRWRTMKKLKL) folds into the HTH myb-type domain. The segment at residues 403–428 (WSKILLHYKFNNRTSVMLKDRWRTMK) is a DNA-binding region (H-T-H motif).

As to quaternary structure, homodimer; can contain both isoforms. Found in a complex with POT1; TINF2 and TNKS1. Interacts with ATM, TINF2, TNKS1, TNKS2, PINX1, NEK2 and MAPRE1. Component of the shelterin complex (telosome) composed of TERF1, TERF2, TINF2, TERF2IP ACD and POT1. Interacts with RLIM (via N-terminus). Interacts with FBXO4. Interaction with TINF2 protects against interaction with FBXO4 and subsequent polyubiquitination and proteasomal degradation. Interacts with GNL3L; this interaction promotes homodimerization. Interacts with TIN2. Interacts with RTEL1. Interactions with GNL3L and TIN2 are mutually exclusive. Interacts with CCDC79/TERB1. Interacts with TRIOBP isoform 1; mediates TERF1 localization to the centrosome. Post-translationally, phosphorylated preferentially on Ser-219 in an ATM-dependent manner in response to ionizing DNA damage. In terms of processing, ADP-ribosylation by TNKS1 or TNKS2 diminishes its ability to bind to telomeric DNA. Ubiquitinated by RLIM/RNF12, leading to its degradation by the proteasome. Ubiquitinated by a SCF (SKP1-CUL1-F-box protein) ubiquitin-protein ligase complex, leading to its degradation by the proteasome. Highly expressed and ubiquitous. Isoform Pin2 predominates.

The protein localises to the nucleus. It is found in the cytoplasm. The protein resides in the cytoskeleton. Its subcellular location is the spindle. It localises to the chromosome. The protein localises to the telomere. Functionally, binds the telomeric double-stranded 5'-TTAGGG-3' repeat and negatively regulates telomere length. Involved in the regulation of the mitotic spindle. Component of the shelterin complex (telosome) that is involved in the regulation of telomere length and protection. Shelterin associates with arrays of double-stranded 5'-TTAGGG-3' repeats added by telomerase and protects chromosome ends; without its protective activity, telomeres are no longer hidden from the DNA damage surveillance and chromosome ends are inappropriately processed by DNA repair pathways. This Homo sapiens (Human) protein is Telomeric repeat-binding factor 1 (TERF1).